The following is a 175-amino-acid chain: Large ribosomal subunit protein bL9 (175 aa).

It belongs to the bacterial ribosomal protein bL9 family.

In terms of biological role, binds to the 23S rRNA. This is Large ribosomal subunit protein bL9 from Orientia tsutsugamushi (strain Boryong) (Rickettsia tsutsugamushi).